The chain runs to 547 residues: Cytochrome P450 monooxygenase 128 (547 aa).

A helical membrane pass occupies residues 9–25 (IPWAAGATLLAWAAYKI). N-linked (GlcNAc...) asparagine glycosylation is found at N336 and N438. Residue C483 coordinates heme.

The protein belongs to the cytochrome P450 family. Heme is required as a cofactor.

It is found in the membrane. It participates in secondary metabolite biosynthesis. Functionally, cytochrome P450 monooxygenase that is able to use 7-ethoxycoumarin and testosterone as substrates for oxidation. The protein is Cytochrome P450 monooxygenase 128 of Postia placenta (strain ATCC 44394 / Madison 698-R) (Brown rot fungus).